A 216-amino-acid chain; its full sequence is Putative germin-like protein 2-1 (216 aa).

The N-terminal stretch at 1–21 (MASTWFFLLALLAVSISNAFA) is a signal peptide. Cys31 and Cys46 form a disulfide bridge. A Cupin type-1 domain is found at 60–210 (SGLHMAGNTS…AFQVEKKIVD (151 aa)). N-linked (GlcNAc...) asparagine glycosylation occurs at Asn67. His108, His110, Glu115, and His156 together coordinate Mn(2+).

The protein belongs to the germin family. In terms of assembly, oligomer (believed to be a pentamer but probably hexamer).

Its subcellular location is the secreted. The protein localises to the extracellular space. The protein resides in the apoplast. May play a role in plant defense. Probably has no oxalate oxidase activity even if the active site is conserved. This chain is Putative germin-like protein 2-1, found in Oryza sativa subsp. japonica (Rice).